Here is a 157-residue protein sequence, read N- to C-terminus: Phosphopantetheine adenylyltransferase (157 aa).

Threonine 8 provides a ligand contact to substrate. Residues 8-9 (TF) and histidine 16 contribute to the ATP site. Residues lysine 40, threonine 72, and arginine 86 each coordinate substrate. ATP is bound by residues 87–89 (GLR), glutamate 97, and 122–128 (YSFLSSS).

The protein belongs to the bacterial CoaD family. Homohexamer. Mg(2+) is required as a cofactor.

It localises to the cytoplasm. It catalyses the reaction (R)-4'-phosphopantetheine + ATP + H(+) = 3'-dephospho-CoA + diphosphate. Its pathway is cofactor biosynthesis; coenzyme A biosynthesis; CoA from (R)-pantothenate: step 4/5. Reversibly transfers an adenylyl group from ATP to 4'-phosphopantetheine, yielding dephospho-CoA (dPCoA) and pyrophosphate. The protein is Phosphopantetheine adenylyltransferase of Prochlorococcus marinus (strain MIT 9301).